The following is a 222-amino-acid chain: PKHD-type hydroxylase P9301_13621 (222 aa).

Residues 81–175 (KIHGIMFTKS…RLVCVGWIES (95 aa)) enclose the Fe2OG dioxygenase domain. Fe cation is bound by residues His-99, Asp-101, and His-156. Arg-166 is a 2-oxoglutarate binding site.

Fe(2+) serves as cofactor. Requires L-ascorbate as cofactor.

The polypeptide is PKHD-type hydroxylase P9301_13621 (Prochlorococcus marinus (strain MIT 9301)).